We begin with the raw amino-acid sequence, 402 residues long: mRNA cap guanine-N(7) methyltransferase (402 aa).

A compositionally biased stretch (basic and acidic residues) spans 1 to 11; sequence MDHVLNPEEKV. Positions 1–75 are disordered; sequence MDHVLNPEEK…PRLEEGHGSL (75 aa). The segment covering 35-50 has biased composition (polar residues); sequence PKLSASEKSLPGNTKS. Basic and acidic residues predominate over residues 55 to 72; it reads KAAEPDSPPKRPRLEEGH. Residues 94 to 401 enclose the mRNA cap 0 methyltransferase domain; that stretch reads SRIFHLRNFN…IYLLFAFEKQ (308 aa). 103–104 lines the mRNA pocket; it reads NN. S-adenosyl-L-methionine-binding residues include K107, G131, D153, D187, Q210, and Y215.

The protein belongs to the class I-like SAM-binding methyltransferase superfamily. mRNA cap 0 methyltransferase family.

The protein localises to the nucleus. The catalysed reaction is a 5'-end (5'-triphosphoguanosine)-ribonucleoside in mRNA + S-adenosyl-L-methionine = a 5'-end (N(7)-methyl 5'-triphosphoguanosine)-ribonucleoside in mRNA + S-adenosyl-L-homocysteine. Catalytic subunit of the mRNA-capping methyltransferase RNMT:RAMAC complex that methylates the N7 position of the added guanosine to the 5'-cap structure of mRNAs. Binds RNA containing 5'-terminal GpppC. The protein is mRNA cap guanine-N(7) methyltransferase (rnmt) of Xenopus laevis (African clawed frog).